A 105-amino-acid polypeptide reads, in one-letter code: uncharacterized protein (105 aa).

Disordered stretches follow at residues 29–55 (HTRV…TDES) and 72–105 (EQRG…RSGR). The segment covering 72–81 (EQRGDRRAVR) has biased composition (basic and acidic residues).

This is an uncharacterized protein from Streptomyces coelicolor (strain ATCC BAA-471 / A3(2) / M145).